Consider the following 156-residue polypeptide: NAD(P)H-quinone oxidoreductase subunit N (156 aa).

It belongs to the complex I NdhN subunit family. NDH-1 can be composed of about 15 different subunits; different subcomplexes with different compositions have been identified which probably have different functions.

The protein resides in the cellular thylakoid membrane. It catalyses the reaction a plastoquinone + NADH + (n+1) H(+)(in) = a plastoquinol + NAD(+) + n H(+)(out). The catalysed reaction is a plastoquinone + NADPH + (n+1) H(+)(in) = a plastoquinol + NADP(+) + n H(+)(out). NDH-1 shuttles electrons from an unknown electron donor, via FMN and iron-sulfur (Fe-S) centers, to quinones in the respiratory and/or the photosynthetic chain. The immediate electron acceptor for the enzyme in this species is believed to be plastoquinone. Couples the redox reaction to proton translocation, and thus conserves the redox energy in a proton gradient. Cyanobacterial NDH-1 also plays a role in inorganic carbon-concentration. This is NAD(P)H-quinone oxidoreductase subunit N from Prochlorococcus marinus (strain MIT 9515).